The sequence spans 456 residues: UDP-N-acetylmuramate--L-alanine ligase (456 aa).

117-123 (GTHGKTT) is an ATP binding site.

This sequence belongs to the MurCDEF family.

The protein resides in the cytoplasm. It catalyses the reaction UDP-N-acetyl-alpha-D-muramate + L-alanine + ATP = UDP-N-acetyl-alpha-D-muramoyl-L-alanine + ADP + phosphate + H(+). The protein operates within cell wall biogenesis; peptidoglycan biosynthesis. In terms of biological role, cell wall formation. The sequence is that of UDP-N-acetylmuramate--L-alanine ligase from Clostridium tetani (strain Massachusetts / E88).